Consider the following 319-residue polypeptide: Guanosine ABC transporter permease protein NupQ (319 aa).

9 helical membrane passes run Ile-6 to Leu-26, Ile-39 to Phe-59, Ala-65 to Ile-85, Val-99 to Ile-119, Ile-159 to Leu-179, Ile-204 to Ile-224, Gly-235 to Leu-255, Ala-257 to Phe-277, and Asn-282 to Gly-302.

The protein belongs to the binding-protein-dependent transport system permease family. In terms of assembly, the complex is composed of two ATP-binding proteins (NupO), two transmembrane proteins (NupP and NupQ) and a solute-binding protein (NupN).

Its subcellular location is the cell membrane. Its function is as follows. Part of an ABC transporter complex involved in the uptake of guanosine. Responsible for the translocation of the substrate across the membrane. May be a nucleoside transporter of broad specificity but with various affinities for different substrates. The chain is Guanosine ABC transporter permease protein NupQ from Bacillus subtilis (strain 168).